The following is a 312-amino-acid chain: Fibrinogen-like protein 1 (312 aa).

The N-terminal stretch at 1-22 (MAKMFSFILVTTALVMGRGSSA) is a signal peptide. Positions 39-60 (LLETRVKQQQVKISQLLHEKQV) form a coiled coil. Residues 74 to 306 (LGGKRQYADC…SVVMKIRPND (233 aa)) enclose the Fibrinogen C-terminal domain. 2 disulfides stabilise this stretch: C83-C112 and C248-C261.

Homodimer. Interacts (via the Fibrinogen C-terminal domain) with LAG3 (via Ig-like domains 1 and 2).

It is found in the secreted. Immune suppressive molecule that inhibits antigen-specific T-cell activation by acting as a major ligand of LAG3. Responsible for LAG3 T-cell inhibitory function. Binds LAG3 independently from MHC class II (MHC-II). Secreted by, and promotes growth of, hepatocytes. The polypeptide is Fibrinogen-like protein 1 (FGL1) (Bos taurus (Bovine)).